The sequence spans 1040 residues: MALCVHSFWATAVDTATSCHFISSENCLVLLQALKINIYLCSEVHGLQFFTSIPLFSTVKHIRPYRPPGLDRDYLFVVLNDDTYFSIYWDEDYQKVIVDHPPVRYRVTFPWNRNAKSYCLVDLRMRAIFLSIDEISMICIRILSAEERLKTGRSIDSGFPFSFPVHLIYDMCILNDSSTPTLVVLHSDGLDCYVTAFLLDLSSKSLGKGIRLFERVKPSMIMPFGKRGLLVFESLFIHCMYRGNFVTINGPCTTYMHWTPLKGQKMHYIVCDTNGYLFGVYSSILGKNKWSLVMERLPIPPFDFITSLNSIHEGLLFIGSKNSESKLINLSTLKDVDSIPNLGPIHDLLVLKNDIEKSFLVCAGTPRNASLIYFQHALKLDILGQTKISGILRAMVLPSYPEHKLFLGFPSETVAFNIKEDFQLELDPSLSTKERTIALSGTNGEFVQVTSTFLCIYDSAKRSRLVYIEKITNAACYQEYSAIVINGTALAIFKKDTEVARKVFESEISCLDFSAQFQIGVGFWSKQVMILTFSDNSSISCAFQTNVPSLPRNIILEGVGVDRNLLLVSSGSGEFKSYVLFKNNLVFSETKHFGTTPVSFRRFTMNIGTYIICNNDCPHMVYGFNGALCYMPLSMPQSYDVCQFRDNSGKDFLISVSLGGLKFLQLNPLPELTPRKVLLEHVPLQAIIFQNKLLLRTLENRYEDYESYKENYHLELVDSYDDNSFRVFSFTENERCEKVLKINESSLLVGTSIIEQDKLVPVNGRLILLEFEKELQSLKVVSSMVLSAAVIDLGVYNDRYIVAFGQQVAIVKLTEERLMIDSRISLGSIVLQLIVEGNEIAIADSIGRFTIMYFDGQKFIVVARYLFGENIVKAALYEGTVYIIATNSGLLKLLRYNKDAKNFNDRFICESVYHLHDKVSKFQNFPITNTNSFLEPKMLFATEIGAIGSIVSLKDKELELEELTRKIRKLKFSYLSSMDYESIEADLISPVPFIDGDLVIDVKRWASSELFRLCRSVEHRESLNSYQKVQALLEEIQSLC.

It belongs to the DDB1 family. As to quaternary structure, component of the Clr4 methyltransferase complex (ClrC) composed of at least clr4, rik1, pcu4, rbx1, raf1 and raf2. The cullin pcu4, rik1, raf1, raf2 and the ring-box protein rbx1 are components of an E3 ubiquitin ligase, whose activity is essential for heterochromatin assembly.

The protein resides in the nucleus. It is found in the cytoplasm. It localises to the cytoskeleton. Its subcellular location is the microtubule organizing center. The protein localises to the spindle pole body. The protein resides in the chromosome. Functionally, component of the Clr4 methyltransferase complex (ClrC) which contributes to the establishment of heterochromatin by specifically methylating histone H3 to form H3K9me. ClrC preferentially ubiquitylates H3K14 and ClrC-mediated H3 ubiquitination promotes clr4 methyltransferase activity for the methylation of H3K9. H3K9me represents a specific tag for epigenetic transcriptional repression by recruiting swi6/HP1 to methylated histones which leads to transcriptional silencing within centromeric heterochromatin, telomeric regions and at the silent mating-type loci. Rik1 is involved in the RNAi-mediated targeting of ClrC to heterochromatic repeat elements. Rik1 also has a function in meiotic telomere clustering. The sequence is that of Chromatin modification-related protein rik1 (rik1) from Schizosaccharomyces pombe (strain 972 / ATCC 24843) (Fission yeast).